The primary structure comprises 215 residues: Adenylate kinase (215 aa).

10–15 (GAGKGT) contacts ATP. Residues 30–59 (STGDMLRAAVKAGTELGLKAKSVMDAGGLV) form an NMP region. AMP contacts are provided by residues Thr-31, Arg-36, 57-59 (GLV), 85-88 (GFPR), and Gln-92. An LID region spans residues 122 to 159 (GRRVHPASGRVYHTEYNPPKVAGKDDVSGEELVQREDD). ATP contacts are provided by residues Arg-123 and 132 to 133 (VY). Residues Arg-156 and Arg-167 each contribute to the AMP site. Gly-201 is an ATP binding site.

This sequence belongs to the adenylate kinase family. As to quaternary structure, monomer.

It localises to the cytoplasm. It catalyses the reaction AMP + ATP = 2 ADP. The protein operates within purine metabolism; AMP biosynthesis via salvage pathway; AMP from ADP: step 1/1. Catalyzes the reversible transfer of the terminal phosphate group between ATP and AMP. Plays an important role in cellular energy homeostasis and in adenine nucleotide metabolism. The sequence is that of Adenylate kinase from Ectopseudomonas mendocina (strain ymp) (Pseudomonas mendocina).